The following is a 270-amino-acid chain: tRNA pseudouridine synthase A (270 aa).

The active-site Nucleophile is the D51. Y109 lines the substrate pocket.

The protein belongs to the tRNA pseudouridine synthase TruA family. Homodimer.

It carries out the reaction uridine(38/39/40) in tRNA = pseudouridine(38/39/40) in tRNA. Functionally, formation of pseudouridine at positions 38, 39 and 40 in the anticodon stem and loop of transfer RNAs. The chain is tRNA pseudouridine synthase A from Burkholderia orbicola (strain MC0-3).